The primary structure comprises 178 residues: Putative metal-dependent hydrolase GTNG_0529 (178 aa).

Zn(2+) contacts are provided by histidine 68, histidine 161, and histidine 165.

It belongs to the metal hydrolase YfiT family. As to quaternary structure, homodimer. It depends on Zn(2+) as a cofactor.

Its subcellular location is the cytoplasm. Possible metal-dependent hydrolase. The sequence is that of Putative metal-dependent hydrolase GTNG_0529 from Geobacillus thermodenitrificans (strain NG80-2).